Reading from the N-terminus, the 191-residue chain is Cdc42 homolog (191 aa).

Position 10 to 17 (10 to 17 (GDGAVGKT)) interacts with GTP. Residues 32–40 (YVPTVFDNY) carry the Effector region motif. Residues 57–61 (DTAGQ) and 115–118 (TQID) contribute to the GTP site. C188 is modified (cysteine methyl ester). Residue C188 is the site of S-geranylgeranyl cysteine attachment. Positions 189-191 (KFL) are cleaved as a propeptide — removed in mature form.

This sequence belongs to the small GTPase superfamily. Rho family. CDC42 subfamily.

The protein resides in the cell junction. It localises to the adherens junction. The protein localises to the cell membrane. The enzyme catalyses GTP + H2O = GDP + phosphate + H(+). Functionally, regulates mbt kinase activity and is also required to recruit mbt to adherens junctions. Together with mbt, regulates photoreceptor cell morphogenesis. In Drosophila pseudoobscura pseudoobscura (Fruit fly), this protein is Cdc42 homolog.